We begin with the raw amino-acid sequence, 2167 residues long: RNA editing associated helicase 2 (2167 aa).

The transit peptide at 1–30 (MRAIRLTVACRYLGPFRSVTLSPVVLPVRL) directs the protein to the mitochondrion. Disordered stretches follow at residues 503 to 593 (RARG…DEAT) and 937 to 969 (ENAT…PTNV). Positions 532–541 (SSTQTPSSST) are enriched in low complexity. In terms of domain architecture, DRBM spans 1024–1095 (DAKTVLQRYC…AMHALALLRR (72 aa)). The 166-residue stretch at 1348 to 1513 (LRAISSNQIV…FGNAPIINVE (166 aa)) folds into the Helicase ATP-binding domain. 1361 to 1368 (GTTGCGKT) contacts ATP. The short motif at 1366 to 1367 (GK) is the Important for binding to gRNA element. The DEAH box signature appears at 1460 to 1463 (DEIH). Residues 1585–1762 (AIDHAVRSLD…SLCLQILALD (178 aa)) form the Helicase C-terminal domain. The segment at 2132 to 2167 (IIEPCTEPKGGSSEAEKTHVNSSHTPTTSAEAGGDS) is disordered. Residues 2151–2161 (VNSSHTPTTSA) show a composition bias toward polar residues.

The protein belongs to the DEAD box helicase family. DEAH subfamily. As to quaternary structure, component of the REH2-associated complex (REH2C) composed of helicase REH2, associated factors H2F1 and H2F2, and mRNAs at various editing stages; the formation of the complex is RNA-independent. Within the complex, interacts with H2F1; the interaction is direct. Interacts transiently, in a RNA-dependent manner, with various editing complexes including the RNA editing core (RECC) complex, the gRNA-binding (GRBC) complex (also known as the MRB1 complex) and the RNA editing mediator (REMC) complex. Interacts with GAP1/GRBC2 via RNA forming a variant of the GRBC complex known as REH2-GRBC complex. Interacts with mitochondrial ribosomes.

The protein resides in the mitochondrion. The enzyme catalyses ATP + H2O = ADP + phosphate + H(+). In terms of biological role, ATP-dependent RNA helicase that unwinds RNA in a 3' to 5' direction and that plays an important role in mitochondrial mRNA editing, a process involving the addition and deletion of uridine (U) nucleotides in the pre-mRNA. As part of the RET2-containing gRNA-binding (RET2-GRBC) complex, acts as a scaffold for the assembly of mRNA-gRNA hybrids and the recruitment of the RNA editing core (RECC) complex. Regulates several steps of mRNA editing by the MRBC3010/GRBC6 containing gRNA-binding (MRBC3010-GRBC) complex including loading of unedited mRNA, editing in the first sequence block and subsequent editing progression across multiple sequence blocks. Also, regulates the RNA substrate content of the MRBC3010-GRBC complex as well as the association of this complex with mitoribosomes. The sequence is that of RNA editing associated helicase 2 from Trypanosoma brucei brucei (strain 927/4 GUTat10.1).